Consider the following 111-residue polypeptide: MRLSVFYIFITRLAMTKNATKNEMGSKSPNIVALVLPLLLILYTLSSQVEVVESTGRKLAFWGNPIVWTPHSNSCGGSPASVFASSKWTTGRPCRRSRPPGTNIPVSDQSP.

The first 46 residues, 1-46 (MRLSVFYIFITRLAMTKNATKNEMGSKSPNIVALVLPLLLILYTLS), serve as a signal peptide directing secretion. The short motif at 66 to 79 (IVWTPHSNSCGGSP) is the SCOOP motif element. The SxS motif essential for MIK2 binding signature appears at 72–74 (SNS). The disordered stretch occupies residues 89 to 111 (TTGRPCRRSRPPGTNIPVSDQSP).

It belongs to the serine rich endogenous peptide (SCOOP) phytocytokine family. As to quaternary structure, interacts with MIK2 (via extracellular leucine-rich repeat domain); this interaction triggers the formation of complex between MIK2 and the BAK1/SERK3 and SERK4 coreceptors, and subsequent BAK1 activation by phosphorylation. Mostly expressed in leaves, and, to a lower extent, in roots, stems, siliques, seeds and flowers.

The protein resides in the cell membrane. Its subcellular location is the secreted. It is found in the extracellular space. The protein localises to the apoplast. Brassicaceae-specific phytocytokine (plant endogenous peptide released into the apoplast) perceived by MIK2 in a BAK1/SERK3 and SERK4 coreceptors-dependent manner, that modulates various physiological and antimicrobial processes including growth prevention and reactive oxygen species (ROS) response regulation. This Arabidopsis thaliana (Mouse-ear cress) protein is Secreted transmembrane peptide 5.